The sequence spans 486 residues: Malonate-semialdehyde dehydrogenase (486 aa).

NAD(+)-binding residues include Phe-154, Lys-178, Glu-181, Arg-182, and Ser-231. The Nucleophile role is filled by Cys-286. Residue Glu-386 coordinates NAD(+).

It belongs to the aldehyde dehydrogenase family. IolA subfamily. In terms of assembly, homotetramer.

The catalysed reaction is 3-oxopropanoate + NAD(+) + CoA + H2O = hydrogencarbonate + acetyl-CoA + NADH + H(+). It carries out the reaction 2-methyl-3-oxopropanoate + NAD(+) + CoA + H2O = propanoyl-CoA + hydrogencarbonate + NADH + H(+). It participates in polyol metabolism; myo-inositol degradation into acetyl-CoA; acetyl-CoA from myo-inositol: step 7/7. Functionally, catalyzes the oxidation of malonate semialdehyde (MSA) and methylmalonate semialdehyde (MMSA) into acetyl-CoA and propanoyl-CoA, respectively. Is involved in a myo-inositol catabolic pathway. Bicarbonate, and not CO2, is the end-product of the enzymatic reaction. The polypeptide is Malonate-semialdehyde dehydrogenase (Bacillus cereus (strain G9842)).